The primary structure comprises 225 residues: Cytidylate kinase (225 aa).

11–19 (GPAAAGKST) contacts ATP.

This sequence belongs to the cytidylate kinase family. Type 1 subfamily.

It localises to the cytoplasm. The enzyme catalyses CMP + ATP = CDP + ADP. It catalyses the reaction dCMP + ATP = dCDP + ADP. The chain is Cytidylate kinase from Bacillus cytotoxicus (strain DSM 22905 / CIP 110041 / 391-98 / NVH 391-98).